A 329-amino-acid chain; its full sequence is Homeobox protein Nkx-3.2 (329 aa).

Residues 107-188 (GLGSPCGGAP…PDPSPPDEDP (82 aa)) form a disordered region. Over residues 110–124 (SPCGGAPGAGAGGEP) the composition is skewed to gly residues. The span at 138-160 (ELGRPGDIGERKKQRPLEARAKG) shows a compositional bias: basic and acidic residues. Positions 202-261 (KKRSRAAFSHAQVFELERRFNHQRYLSGPERADLAASLKLTETQVKIWFQNRRYKTKRRQ) form a DNA-binding region, homeobox.

It belongs to the NK-3 homeobox family. As to expression, first expressed in developing facial cartilage in early tailbud embryos, with expression localized to the basihyobranchial, palatoquadrate and possibly Meckel's cartilages. Shortly after, a second area of expression is seen in the musculature of the anterior gut. During late embryogenesis, gut expression extends into hindgut tissues. In adults, expressed at a high level in the kidney, pancreas, spleen and stomach and at a slightly lower level in the intestine, skeletal muscle and tongue. Adult heart, liver and lung show little or no expression.

It is found in the nucleus. This Xenopus laevis (African clawed frog) protein is Homeobox protein Nkx-3.2 (nkx3-2).